The following is a 321-amino-acid chain: LIMR family protein SELMODRAFT_432210 (321 aa).

5 consecutive transmembrane segments (helical) span residues 28–48, 116–133, 139–159, 240–260, and 284–304; these read KQLW…VIPF, CFSL…LDLW, LCVF…FGGV, LVFG…ILVF, and LLGT…VISG.

This sequence belongs to the LIMR family.

The protein resides in the membrane. This chain is LIMR family protein SELMODRAFT_432210, found in Selaginella moellendorffii (Spikemoss).